The following is a 97-amino-acid chain: Aspartyl/glutamyl-tRNA(Asn/Gln) amidotransferase subunit C (97 aa).

Belongs to the GatC family. As to quaternary structure, heterotrimer of A, B and C subunits.

It carries out the reaction L-glutamyl-tRNA(Gln) + L-glutamine + ATP + H2O = L-glutaminyl-tRNA(Gln) + L-glutamate + ADP + phosphate + H(+). It catalyses the reaction L-aspartyl-tRNA(Asn) + L-glutamine + ATP + H2O = L-asparaginyl-tRNA(Asn) + L-glutamate + ADP + phosphate + 2 H(+). Its function is as follows. Allows the formation of correctly charged Asn-tRNA(Asn) or Gln-tRNA(Gln) through the transamidation of misacylated Asp-tRNA(Asn) or Glu-tRNA(Gln) in organisms which lack either or both of asparaginyl-tRNA or glutaminyl-tRNA synthetases. The reaction takes place in the presence of glutamine and ATP through an activated phospho-Asp-tRNA(Asn) or phospho-Glu-tRNA(Gln). This Prochlorococcus marinus (strain MIT 9215) protein is Aspartyl/glutamyl-tRNA(Asn/Gln) amidotransferase subunit C.